A 346-amino-acid polypeptide reads, in one-letter code: tRNA N6-adenosine threonylcarbamoyltransferase (346 aa).

Fe cation contacts are provided by His111 and His115. Substrate-binding positions include 134-138 (LVSGG), Asp167, Gly180, and Asn279. Asp307 provides a ligand contact to Fe cation.

The protein belongs to the KAE1 / TsaD family. Requires Fe(2+) as cofactor.

It is found in the cytoplasm. The enzyme catalyses L-threonylcarbamoyladenylate + adenosine(37) in tRNA = N(6)-L-threonylcarbamoyladenosine(37) in tRNA + AMP + H(+). Its function is as follows. Required for the formation of a threonylcarbamoyl group on adenosine at position 37 (t(6)A37) in tRNAs that read codons beginning with adenine. Is involved in the transfer of the threonylcarbamoyl moiety of threonylcarbamoyl-AMP (TC-AMP) to the N6 group of A37, together with TsaE and TsaB. TsaD likely plays a direct catalytic role in this reaction. This Burkholderia ambifaria (strain ATCC BAA-244 / DSM 16087 / CCUG 44356 / LMG 19182 / AMMD) (Burkholderia cepacia (strain AMMD)) protein is tRNA N6-adenosine threonylcarbamoyltransferase.